Reading from the N-terminus, the 356-residue chain is MSTTSEAVQSKYSEAGVDIDKGNAFVEGIKDIVASTHKNGVIDNIGGFSAHIAIDVTKYPKPVIVNSTDGVGTKLAIAHMCNKHDTIGIDLVAMCVNDLIVGGATPLSFLDYFAVGKLDIEVATEVVKGIAEGCKQAGCSLVGGETAEMPGLYQGSDYDLAGFVTGIVDRDSIIDGSDVRSGNKIIGLASSGVHSNGYSLVRKICFDDNDYSVEDHIEELGSTLGEELLKPTRIYVQQVLNVIKNYPIHGMVHNTGGGFIDNIPRILPKGYKATLQAGSWDVPAIFTFLEEKGKVPREEMYRTFNMGVGLLVIVAEDKAEDILHHFEALGEKASIIGEIQKQTDENDERVTILPEG.

Belongs to the AIR synthase family.

It is found in the cytoplasm. It catalyses the reaction 2-formamido-N(1)-(5-O-phospho-beta-D-ribosyl)acetamidine + ATP = 5-amino-1-(5-phospho-beta-D-ribosyl)imidazole + ADP + phosphate + H(+). It participates in purine metabolism; IMP biosynthesis via de novo pathway; 5-amino-1-(5-phospho-D-ribosyl)imidazole from N(2)-formyl-N(1)-(5-phospho-D-ribosyl)glycinamide: step 2/2. This chain is Phosphoribosylformylglycinamidine cyclo-ligase, found in Desulfotalea psychrophila (strain LSv54 / DSM 12343).